A 275-amino-acid polypeptide reads, in one-letter code: Expansin-B6 (275 aa).

The signal sequence occupies residues 1–25; it reads MAARMGSKVAAILAILSVLVVHGSC. Asn33 carries N-linked (GlcNAc...) asparagine glycosylation. Residues 64–170 enclose the Expansin-like EG45 domain; that stretch reads GGACGFKNVN…RRVPCNYPGL (107 aa). 3 cysteine pairs are disulfide-bonded: Cys67–Cys95, Cys98–Cys165, and Cys103–Cys109. The Expansin-like CBD domain occupies 183-270; it reads VYFAVLVEYE…NWSPNSNYRS (88 aa).

The protein belongs to the expansin family. Expansin B subfamily. Expressed in internodes.

The protein localises to the secreted. It is found in the cell wall. The protein resides in the membrane. Its function is as follows. May cause loosening and extension of plant cell walls by disrupting non-covalent bonding between cellulose microfibrils and matrix glucans. No enzymatic activity has been found. May be required for rapid internodal elongation in deepwater rice during submergence. The polypeptide is Expansin-B6 (EXPB6) (Oryza sativa subsp. japonica (Rice)).